Consider the following 482-residue polypeptide: Histone deacetylase 1 (482 aa).

Residues 9-321 are histone deacetylase; that stretch reads RKVCYYYDGD…WTYETAVALD (313 aa). 1D-myo-inositol 1,4,5,6-tetrakisphosphate is bound by residues Gly-27 and Lys-31. Lys-74 is subject to N6-acetyllysine; alternate. Residue Lys-74 forms a Glycyl lysine isopeptide (Lys-Gly) (interchain with G-Cter in SUMO2); alternate linkage. Residue His-141 is part of the active site. Zn(2+) is bound by residues Asp-176 and His-178. An N6-acetyllysine modification is found at Lys-220. S-nitrosocysteine is present on Cys-261. Asp-264 provides a ligand contact to Zn(2+). Residue Arg-270 coordinates 1D-myo-inositol 1,4,5,6-tetrakisphosphate. At Cys-273 the chain carries S-nitrosocysteine. The span at 390-400 shows a compositional bias: acidic residues; it reads PEESGDEDEED. Residues 390–482 are disordered; sequence PEESGDEDEE…KGVKEEVKMA (93 aa). 5 positions are modified to phosphoserine: Ser-393, Ser-406, Ser-409, Ser-421, and Ser-423. Residues 401-416 are compositionally biased toward basic and acidic residues; it reads PDKRISICSSDKRIAC. A compositionally biased stretch (acidic residues) spans 417–427; sequence EEEFSDSDEEG. Lys-432 bears the N6-methylated lysine; by EHMT2 mark. A Glycyl lysine isopeptide (Lys-Gly) (interchain with G-Cter in SUMO2) cross-link involves residue Lys-438. The span at 443 to 482 shows a compositional bias: basic and acidic residues; it reads VKTEDEKEKDPEEKKEVTEEEKTKEEKPEAKGVKEEVKMA. Lys-444 is covalently cross-linked (Glycyl lysine isopeptide (Lys-Gly) (interchain with G-Cter in SUMO2); alternate). Lys-444 is covalently cross-linked (Glycyl lysine isopeptide (Lys-Gly) (interchain with G-Cter in SUMO); alternate). Glycyl lysine isopeptide (Lys-Gly) (interchain with G-Cter in SUMO2) cross-links involve residues Lys-456, Lys-457, and Lys-473. Lys-476 is covalently cross-linked (Glycyl lysine isopeptide (Lys-Gly) (interchain with G-Cter in SUMO2); alternate). Lys-476 is covalently cross-linked (Glycyl lysine isopeptide (Lys-Gly) (interchain with G-Cter in SUMO); alternate). A Glycyl lysine isopeptide (Lys-Gly) (interchain with G-Cter in SUMO2) cross-link involves residue Lys-480.

Belongs to the histone deacetylase family. HD type 1 subfamily. In terms of assembly, part of the core histone deacetylase (HDAC) complex composed of HDAC1, HDAC2, RBBP4 and RBBP7, the core complex associates with SIN3, SAP18 and SAP30 to form the SIN3 HDAC complex. Component of the nucleosome remodeling and deacetylase (NuRD) repressor complex, composed of core proteins MTA1, MTA2, MTA3, RBBP4, RBBP7, HDAC1, HDAC2, MBD2, MBD3, and peripherally associated proteins CDK2AP1, CDK2AP2, GATAD2A, GATAD2B, CHD3, CHD4 and CHD5. The exact stoichiometry of the NuRD complex is unknown, and some subunits such as MBD2 and MBD3, GATAD2A and GATAD2B, and CHD3, CHD4 and CHD5 define mutually exclusive NuRD complexes. Component of a BHC histone deacetylase complex that contains HDAC1, HDAC2, HMG20B/BRAF35, KDM1A, RCOR1/CoREST and PHF21A/BHC80. The BHC complex may also contain ZMYM2, ZNF217, ZMYM3, GSE1 and GTF2I. Component of a mSin3A corepressor complex that contains SIN3A, SAP130, SUDS3/SAP45, ARID4B/SAP180, HDAC1 and HDAC2. Found in a trimeric complex with APBB1 and TSHZ3; the interaction between HDAC1 and APBB1 is mediated by TSHZ3. Forms a complex comprising APPL1, RUVBL2, APPL2, CTNNB1 and HDAC2. Component of a RCOR/GFI/KDM1A/HDAC complex. Part of a complex composed of TRIM28, HDAC1, HDAC2 and EHMT2. Part of a complex containing at least CDYL, MIER1, MIER2, HDAC1 and HDAC2. The large PER complex involved in the histone deacetylation is composed of at least HDAC1, PER2, SFPQ and SIN3A. Associates with the 9-1-1 complex; interacts with HUS1. Found in a complex with DNMT3A and HDAC7. Found in a complex with YY1, SIN3A and GON4L. Identified in a histone deacetylase complex that contains DNTTIP1, HDAC1 and MIDEAS; this complex assembles into a tetramer that contains four copies of each protein chain. Found in a complex composed of at least SINHCAF, SIN3A, HDAC1, SAP30, RBBP4, OGT and TET1. Component of the SIN3B complex, which includes SIN3B, HDAC1, PHF12 and MORF4L1. Interacts with GFI1; the interaction is direct. Interacts directly with GFI1B. Interacts with TSHZ3 (via N-terminus); the interaction is direct. Interacts with APEX1; the interaction is not dependent on the acetylated status of APEX1. Interacts with BANP. Interacts with BAZ2A/TIP5. Interacts with BCL6. Interacts with BCOR. Interacts with BHLHE40/DEC1. Interacts with BRCC3; this interaction is enhanced in the presence of PWWP2B. Interacts with BRMS1. Interacts with BRMS1L. Interacts with C10orf90/FATS (via its N-terminal); the interaction prevents binding of HDAC1 to CDKN1A/p21 and facilitates the acetylation and stabilization of CDKN1A/p21. Interacts with CBFA2T3. Interacts with CCAR2. Interacts with CDK2AP1. Interacts with CHD3. Interacts with CHD4. Interacts with CHFR. Interacts with CIART. Interacts with CDKN1A/p21. Interacts with CDK5 complexed to CDK5R1 (p25). Interacts with CRY1. Interacts with DAXX. Interacts with DDIT3/CHOP. Interacts with DDX5. Interacts with DHX36; this interaction occurs in a RNA-dependent manner. Interacts with DNMT1. Interacts with DNTTIP1. Interacts with E4F1. Interacts with EP300. Interacts with ERCC6. Interacts with GATAD2A. Interacts with HCFC1. Interacts with HDAC9. Interacts with HUS1. Interacts with INSM1. Interacts with KDM4A. Interacts with KDM5A; this interaction impairs histone deacetylation. Interacts with KDM5B. Interacts with KLF1. Interacts with MBD3L2. Interacts with MIER1. Interacts with NFE4. Interacts with NR4A2/NURR1. Interacts with NR1D2 (via C-terminus). Interacts with NRIP1. Interacts with NSD2. Interacts with PACS2. Interacts with PHB2. Interacts with PPHLN1. Interacts with PRDM6. Interacts with PRDM16. Interacts with PWWP2A in a MTA1-dependent manner. Interacts with PWWP2B. Interacts with RB1. Interacts with RERE. Interacts with SANBR (via the BTB domain). Interacts with SAMSN1. Interacts with SAP30L. Interacts with SETDB1. Interacts with SIN3A. Interacts with SMAD3. Interacts with SMAD4; positively regulated by ZBTB7A. Interacts with SMARCAD1. Interacts with SMARCA4/BRG1. Interacts with SMYD2. Interacts with SMYD4 (via MYND-type zinc finger). Interacts with SP1; the interaction deacetylates SP1 and regulates its transcriptional activity. Interacts with SP3; the interaction deacetylates SP3 and regulates its transcriptional activity. In vitro, C(18) ceramides increase this interaction and the subsequent SP3 deacetylation and SP3-mediated repression of the TERT promoter. Interacts with SPEN/MINT. Interacts with SPHK2. Interacts with SUV39H1. Interacts with TGIF. Interacts with TGIF2. Interacts with TRAF6. Interacts with TRIM28; the interaction recruits HDAC1 to E2F1 and inhibits its acetylation. Interacts with TSC22D3 isoform 1; this interaction affects HDAC1 activity on MYOG promoter and thus inhibits MYOD1 transcriptional activity. Interacts with UHRF1. Interacts with UHRF2. Interacts with ZBTB7A. Interacts with ZMYND8. Interacts with ZMYND15. Interacts with ZNF431. Interacts with ZNF516; this interaction is enhanced in the presence of PWWP2B. Interacts with ZNF541. Interacts with ZNF638. Interacts with ZNHIT1. Interacts with the non-histone region of MACROH2A1. Identified in a complex with HDAC2, KCTD19, DNTTIP1 and ZNF541. Interacts with MSX3. Interacts with VRK1. It depends on Zn(2+) as a cofactor. In terms of processing, sumoylated on Lys-444 and Lys-476; which promotes enzymatic activity. Desumoylated by SENP1. Post-translationally, phosphorylation on Ser-421 and Ser-423 promotes enzymatic activity and interactions with NuRD and SIN3 complexes. Phosphorylated by CDK5. Ubiquitinated by CHFR and KCTD11, leading to its degradation by the proteasome.

It localises to the nucleus. The enzyme catalyses N(6)-acetyl-L-lysyl-[histone] + H2O = L-lysyl-[histone] + acetate. It carries out the reaction N(6)-acetyl-L-lysyl-[protein] + H2O = L-lysyl-[protein] + acetate. It catalyses the reaction N(6)-(2E)-butenoyl-L-lysyl-[protein] + H2O = (2E)-2-butenoate + L-lysyl-[protein]. The catalysed reaction is N(6)-[(S)-lactoyl]-L-lysyl-[protein] + H2O = (S)-lactate + L-lysyl-[protein]. With respect to regulation, inositol tetraphosphate (1D-myo-inositol 1,4,5,6-tetrakisphosphate) may act as an intermolecular glue between HDAC1 and N-Cor repressor complex components. Its function is as follows. Histone deacetylase that catalyzes the deacetylation of lysine residues on the N-terminal part of the core histones (H2A, H2B, H3 and H4). Histone deacetylation gives a tag for epigenetic repression and plays an important role in transcriptional regulation, cell cycle progression and developmental events. Histone deacetylases act via the formation of large multiprotein complexes. Acts as a component of the histone deacetylase NuRD complex which participates in the remodeling of chromatin. As part of the SIN3B complex is recruited downstream of the constitutively active genes transcriptional start sites through interaction with histones and mitigates histone acetylation and RNA polymerase II progression within transcribed regions contributing to the regulation of transcription. Also functions as a deacetylase for non-histone targets, such as NR1D2, RELA, SP1, SP3, STAT3 and TSHZ3. Deacetylates SP proteins, SP1 and SP3, and regulates their function. Component of the BRG1-RB1-HDAC1 complex, which negatively regulates the CREST-mediated transcription in resting neurons. Upon calcium stimulation, HDAC1 is released from the complex and CREBBP is recruited, which facilitates transcriptional activation. Deacetylates TSHZ3 and regulates its transcriptional repressor activity. Deacetylates 'Lys-310' in RELA and thereby inhibits the transcriptional activity of NF-kappa-B. Deacetylates NR1D2 and abrogates the effect of KAT5-mediated relieving of NR1D2 transcription repression activity. Component of a RCOR/GFI/KDM1A/HDAC complex that suppresses, via histone deacetylase (HDAC) recruitment, a number of genes implicated in multilineage blood cell development. Involved in CIART-mediated transcriptional repression of the circadian transcriptional activator: CLOCK-BMAL1 heterodimer. Required for the transcriptional repression of circadian target genes, such as PER1, mediated by the large PER complex or CRY1 through histone deacetylation. In addition to protein deacetylase activity, also has protein-lysine deacylase activity: acts as a protein decrotonylase and delactylase by mediating decrotonylation ((2E)-butenoyl) and delactylation (lactoyl) of histones, respectively. The polypeptide is Histone deacetylase 1 (Hdac1) (Rattus norvegicus (Rat)).